Here is a 517-residue protein sequence, read N- to C-terminus: Putative alpha-L-fucosidase 1 (517 aa).

The signal sequence occupies residues Met1–Ala20. N-linked (GlcNAc...) asparagine glycosylation is found at Asn119, Asn249, Asn296, Asn321, Asn352, Asn496, and Asn511.

It belongs to the glycosyl hydrolase 29 family.

It is found in the secreted. It localises to the extracellular space. The protein localises to the apoplast. The enzyme catalyses an alpha-L-fucoside + H2O = L-fucose + an alcohol. In terms of biological role, alpha-L-fucosidase is responsible for hydrolyzing the alpha-1,6-linked fucose joined to the reducing-end N-acetylglucosamine of the carbohydrate moieties of glycoproteins. Active only against 2'-fucosyl-lactitol when heterologously expressed. This is Putative alpha-L-fucosidase 1 from Oryza sativa subsp. japonica (Rice).